The sequence spans 800 residues: DNA topoisomerase 4 subunit A (800 aa).

Residues 31–495 (LPDVRDGLKP…EIEEIKIDKE (465 aa)) form the Topo IIA-type catalytic domain. The O-(5'-phospho-DNA)-tyrosine intermediate role is filled by Tyr119.

This sequence belongs to the type II topoisomerase GyrA/ParC subunit family. ParC type 2 subfamily. As to quaternary structure, heterotetramer composed of ParC and ParE.

It localises to the cell membrane. The catalysed reaction is ATP-dependent breakage, passage and rejoining of double-stranded DNA.. In terms of biological role, topoisomerase IV is essential for chromosome segregation. It relaxes supercoiled DNA. Performs the decatenation events required during the replication of a circular DNA molecule. The protein is DNA topoisomerase 4 subunit A of Staphylococcus aureus (strain Mu50 / ATCC 700699).